Reading from the N-terminus, the 122-residue chain is Large ribosomal subunit protein uL14 (122 aa).

Belongs to the universal ribosomal protein uL14 family. Part of the 50S ribosomal subunit. Forms a cluster with proteins L3 and L19. In the 70S ribosome, L14 and L19 interact and together make contacts with the 16S rRNA in bridges B5 and B8.

Binds to 23S rRNA. Forms part of two intersubunit bridges in the 70S ribosome. This is Large ribosomal subunit protein uL14 from Clostridium botulinum (strain 657 / Type Ba4).